We begin with the raw amino-acid sequence, 338 residues long: Lipoate-protein ligase A (338 aa).

The BPL/LPL catalytic domain maps to P29 to V216. ATP-binding positions include R71, G76–F79, and K134. Residue K134 participates in (R)-lipoate binding.

This sequence belongs to the LplA family. Monomer.

Its subcellular location is the cytoplasm. It carries out the reaction L-lysyl-[lipoyl-carrier protein] + (R)-lipoate + ATP = N(6)-[(R)-lipoyl]-L-lysyl-[lipoyl-carrier protein] + AMP + diphosphate + H(+). The protein operates within protein modification; protein lipoylation via exogenous pathway; protein N(6)-(lipoyl)lysine from lipoate: step 1/2. It functions in the pathway protein modification; protein lipoylation via exogenous pathway; protein N(6)-(lipoyl)lysine from lipoate: step 2/2. Functionally, catalyzes both the ATP-dependent activation of exogenously supplied lipoate to lipoyl-AMP and the transfer of the activated lipoyl onto the lipoyl domains of lipoate-dependent enzymes. The polypeptide is Lipoate-protein ligase A (Escherichia coli O17:K52:H18 (strain UMN026 / ExPEC)).